Here is a 492-residue protein sequence, read N- to C-terminus: Aspartyl/glutamyl-tRNA(Asn/Gln) amidotransferase subunit B (492 aa).

It belongs to the GatB/GatE family. GatB subfamily. As to quaternary structure, heterotrimer of A, B and C subunits.

It catalyses the reaction L-glutamyl-tRNA(Gln) + L-glutamine + ATP + H2O = L-glutaminyl-tRNA(Gln) + L-glutamate + ADP + phosphate + H(+). The enzyme catalyses L-aspartyl-tRNA(Asn) + L-glutamine + ATP + H2O = L-asparaginyl-tRNA(Asn) + L-glutamate + ADP + phosphate + 2 H(+). In terms of biological role, allows the formation of correctly charged Asn-tRNA(Asn) or Gln-tRNA(Gln) through the transamidation of misacylated Asp-tRNA(Asn) or Glu-tRNA(Gln) in organisms which lack either or both of asparaginyl-tRNA or glutaminyl-tRNA synthetases. The reaction takes place in the presence of glutamine and ATP through an activated phospho-Asp-tRNA(Asn) or phospho-Glu-tRNA(Gln). This chain is Aspartyl/glutamyl-tRNA(Asn/Gln) amidotransferase subunit B, found in Bradyrhizobium sp. (strain BTAi1 / ATCC BAA-1182).